The sequence spans 287 residues: Elongation factor Ts (287 aa).

The interval 80–83 (TDFL) is involved in Mg(2+) ion dislocation from EF-Tu.

The protein belongs to the EF-Ts family.

It localises to the cytoplasm. In terms of biological role, associates with the EF-Tu.GDP complex and induces the exchange of GDP to GTP. It remains bound to the aminoacyl-tRNA.EF-Tu.GTP complex up to the GTP hydrolysis stage on the ribosome. The polypeptide is Elongation factor Ts (Pseudomonas putida (strain W619)).